The primary structure comprises 319 residues: Acetyl-coenzyme A carboxylase carboxyl transferase subunit alpha (319 aa).

The region spanning 35-296 (NIDEEVHRLR…KAQLLADLAD (262 aa)) is the CoA carboxyltransferase C-terminal domain.

Belongs to the AccA family. In terms of assembly, acetyl-CoA carboxylase is a heterohexamer composed of biotin carboxyl carrier protein (AccB), biotin carboxylase (AccC) and two subunits each of ACCase subunit alpha (AccA) and ACCase subunit beta (AccD).

It localises to the cytoplasm. The catalysed reaction is N(6)-carboxybiotinyl-L-lysyl-[protein] + acetyl-CoA = N(6)-biotinyl-L-lysyl-[protein] + malonyl-CoA. The protein operates within lipid metabolism; malonyl-CoA biosynthesis; malonyl-CoA from acetyl-CoA: step 1/1. In terms of biological role, component of the acetyl coenzyme A carboxylase (ACC) complex. First, biotin carboxylase catalyzes the carboxylation of biotin on its carrier protein (BCCP) and then the CO(2) group is transferred by the carboxyltransferase to acetyl-CoA to form malonyl-CoA. This chain is Acetyl-coenzyme A carboxylase carboxyl transferase subunit alpha, found in Escherichia coli O139:H28 (strain E24377A / ETEC).